The chain runs to 390 residues: Oxysterol-binding protein 10 (390 aa).

It belongs to the OSBP family.

This is Oxysterol-binding protein 10 (osbJ) from Dictyostelium discoideum (Social amoeba).